The chain runs to 521 residues: Glutamate--cysteine ligase (521 aa).

The protein belongs to the glutamate--cysteine ligase type 1 family. Type 1 subfamily.

It catalyses the reaction L-cysteine + L-glutamate + ATP = gamma-L-glutamyl-L-cysteine + ADP + phosphate + H(+). It functions in the pathway sulfur metabolism; glutathione biosynthesis; glutathione from L-cysteine and L-glutamate: step 1/2. This Aliivibrio fischeri (strain MJ11) (Vibrio fischeri) protein is Glutamate--cysteine ligase.